Reading from the N-terminus, the 348-residue chain is Dihydroorotate dehydrogenase (quinone) (348 aa).

Residues 65–69 and threonine 89 each bind FMN; that span reads AGLDK. A substrate-binding site is contributed by lysine 69. Substrate is bound at residue 114–118; it reads NRLGF. The FMN site is built by asparagine 147 and asparagine 180. Substrate is bound at residue asparagine 180. Catalysis depends on serine 183, which acts as the Nucleophile. Substrate is bound at residue asparagine 185. The FMN site is built by lysine 225 and threonine 253. 254–255 is a binding site for substrate; it reads NT. Residues glycine 276, glycine 305, and 326–327 each bind FMN; that span reads YS.

It belongs to the dihydroorotate dehydrogenase family. Type 2 subfamily. As to quaternary structure, monomer. Requires FMN as cofactor.

It localises to the cell membrane. The catalysed reaction is (S)-dihydroorotate + a quinone = orotate + a quinol. Its pathway is pyrimidine metabolism; UMP biosynthesis via de novo pathway; orotate from (S)-dihydroorotate (quinone route): step 1/1. Functionally, catalyzes the conversion of dihydroorotate to orotate with quinone as electron acceptor. The sequence is that of Dihydroorotate dehydrogenase (quinone) from Delftia acidovorans (strain DSM 14801 / SPH-1).